A 668-amino-acid chain; its full sequence is DNA ligase (668 aa).

Residues 34–38 (DAEYD), 83–84 (SL), and Glu-113 each bind NAD(+). Lys-115 acts as the N6-AMP-lysine intermediate in catalysis. Residues Arg-136, Glu-170, Lys-286, and Lys-310 each coordinate NAD(+). Residues Cys-404, Cys-407, Cys-422, and Cys-427 each coordinate Zn(2+). In terms of domain architecture, BRCT spans 590–668 (ESDSYFAGKT…EVKMLEELKK (79 aa)).

The protein belongs to the NAD-dependent DNA ligase family. LigA subfamily. Mg(2+) is required as a cofactor. Requires Mn(2+) as cofactor.

The enzyme catalyses NAD(+) + (deoxyribonucleotide)n-3'-hydroxyl + 5'-phospho-(deoxyribonucleotide)m = (deoxyribonucleotide)n+m + AMP + beta-nicotinamide D-nucleotide.. Functionally, DNA ligase that catalyzes the formation of phosphodiester linkages between 5'-phosphoryl and 3'-hydroxyl groups in double-stranded DNA using NAD as a coenzyme and as the energy source for the reaction. It is essential for DNA replication and repair of damaged DNA. The protein is DNA ligase of Bacillus pumilus (strain SAFR-032).